Consider the following 97-residue polypeptide: Putative membrane protein insertion efficiency factor (97 aa).

It belongs to the UPF0161 family.

Its subcellular location is the cell inner membrane. Could be involved in insertion of integral membrane proteins into the membrane. This is Putative membrane protein insertion efficiency factor from Chlamydia muridarum (strain MoPn / Nigg).